The chain runs to 184 residues: Large ribosomal subunit protein uL15 (184 aa).

Positions 1–45 are disordered; the sequence is MDLSSLRPAKGAVKNKKRVGRGQGSGNGTTAGKGNNGQQSRSGYK. Positions 21–35 are enriched in gly residues; sequence RGQGSGNGTTAGKGN.

Belongs to the universal ribosomal protein uL15 family. Part of the 50S ribosomal subunit.

Binds to the 23S rRNA. This is Large ribosomal subunit protein uL15 from Pelodictyon phaeoclathratiforme (strain DSM 5477 / BU-1).